A 417-amino-acid chain; its full sequence is DNA primase small subunit (417 aa).

An N-acetylmethionine modification is found at methionine 1. Residues glutamate 44, aspartate 109, and aspartate 111 contribute to the active site. Residues aspartate 109 and aspartate 111 each coordinate Mg(2+). Positions 109 and 111 each coordinate Mn(2+). Position 109–111 (109–111 (DID)) interacts with a ribonucleoside 5'-triphosphate. Cysteine 121, cysteine 122, cysteine 128, and cysteine 131 together coordinate Zn(2+). A Zinc knuckle motif motif is present at residues 121–131 (CCSSADICSKC). 160 to 166 (SGRRGVH) contributes to the a ribonucleoside 5'-triphosphate binding site. Aspartate 305 lines the Mg(2+) pocket. Aspartate 305 is a Mn(2+) binding site. Residues 314–317 (HLLK) and histidine 323 each bind a ribonucleoside 5'-triphosphate.

This sequence belongs to the eukaryotic-type primase small subunit family. In terms of assembly, heterodimer of a catalytic subunit PRIM1 and a regulatory subunit PRIM2, also known as the DNA primase complex. Interacts with PRIM2/p58 (via C-terminus). Component of the alpha DNA polymerase complex (also known as the alpha DNA polymerase-primase complex) consisting of four subunits: the catalytic subunit POLA1, the regulatory subunit POLA2, and the primase complex subunits PRIM1 and PRIM2 respectively. Within the complex, POLA1 directly interacts with PRIM2. It depends on Mg(2+) as a cofactor. The cofactor is Mn(2+).

The enzyme catalyses ssDNA + n NTP = ssDNA/pppN(pN)n-1 hybrid + (n-1) diphosphate.. The presence of the regulatory subunit PRIM2/p58 accelerates the kinetics of initiation and primer extension. Catalytic subunit of the DNA primase complex and component of the DNA polymerase alpha complex (also known as the alpha DNA polymerase-primase complex) which play an essential role in the initiation of DNA synthesis. During the S phase of the cell cycle, the DNA polymerase alpha complex (composed of a catalytic subunit POLA1, an accessory subunit POLA2 and two primase subunits, the catalytic subunit PRIM1 and the regulatory subunit PRIM2) is recruited to DNA at the replicative forks via direct interactions with MCM10 and WDHD1. The primase subunit of the polymerase alpha complex initiates DNA synthesis by oligomerising short RNA primers on both leading and lagging strands. These primers are initially extended by the polymerase alpha catalytic subunit and subsequently transferred to polymerase delta and polymerase epsilon for processive synthesis on the lagging and leading strand, respectively. In the primase complex, both subunits are necessary for the initial di-nucleotide formation, but the extension of the primer depends only on the catalytic subunit. Can add both ribo- and deoxynucleotides during elongation of the primers. Synthesizes 9-mer RNA primers (also known as the 'unit length' RNA primers). Incorporates only ribonucleotides in the presence of ribo- and deoxy-nucleotide triphosphates (rNTPs, dNTPs). Requires template thymine or cytidine to start the RNA primer synthesis, with an adenine or guanine at its 5'-end. Binds single stranded DNA. In Mus musculus (Mouse), this protein is DNA primase small subunit (Prim1).